A 1521-amino-acid polypeptide reads, in one-letter code: Suppressor of Ty 6 homolog (1521 aa).

Residues 1–204 (MDFIDNQAEE…EGAEDDARDV (204 aa)) form a disordered region. The span at 26 to 41 (KKMKMAKDKLKKKKKV) shows a compositional bias: basic residues. Residues 26–42 (KKMKMAKDKLKKKKKVV) carry the Nuclear localization signal motif. Acidic residues-rich tracts occupy residues 45-56 (SDEDEDDEDDEE) and 67-76 (ADEDDEEEDA). Basic and acidic residues predominate over residues 77–89 (RSEKSDRSRRSEI). Residues 90-103 (NDELDDEDLDLIDE) are compositionally biased toward acidic residues. The segment covering 127–149 (PIRRSNQDDDDLQSERGSDDGDK) has biased composition (basic and acidic residues). Residues 167–177 (RSEDDFIEDDG) are compositionally biased toward acidic residues. The S1 motif domain occupies 1182–1251 (LNAGRPGGCV…EKFSILLSCK (70 aa)). Residues 1299-1388 (HPNFHNVSYE…IARFVLPMIQ (90 aa)) form the SH2 domain. Positions 1490–1521 (GIRSSLSYRPTGRTGPPPSAPYQQPPQQQYYR) are disordered. Over residues 1504-1513 (GPPPSAPYQQ) the composition is skewed to pro residues.

This sequence belongs to the SPT6 family. Interacts with glp-1 and lin-12.

The protein localises to the nucleus. In terms of biological role, histone H3-H4 chaperone that plays a role in maintenance of chromatin structure during RNA polymerase II transcription elongation. May be required for several aspects of morphogenesis of C.briggsae, including regulation of division in the germline and gut and specification of ventral-uterine precursor cell fate. The polypeptide is Suppressor of Ty 6 homolog (emb-5) (Caenorhabditis briggsae).